Consider the following 488-residue polypeptide: Endoglucanase A (488 aa).

Residues His59, 63–64 (WY), Tyr90, and His125 each bind substrate. The Proton donor role is filled by Glu163. Tyr226 lines the substrate pocket. Glu252 functions as the Nucleophile in the catalytic mechanism. Substrate-binding positions include 258–259 (AT), Trp286, and 291–293 (KDE). Disordered stretches follow at residues 326–362 (ESAS…AWDP) and 388–451 (EPGA…WDPT). 2 stretches are compositionally biased toward pro residues: residues 332-353 (PSDP…PPSD) and 405-416 (PSEPSDPPPPSE). Acidic residues predominate over residues 417 to 433 (PEPDPGEPDPGEPDPGE).

The protein belongs to the glycosyl hydrolase 5 (cellulase A) family.

The enzyme catalyses Endohydrolysis of (1-&gt;4)-beta-D-glucosidic linkages in cellulose, lichenin and cereal beta-D-glucans.. In Evansella cellulosilytica (strain ATCC 21833 / DSM 2522 / FERM P-1141 / JCM 9156 / N-4) (Bacillus cellulosilyticus), this protein is Endoglucanase A (celA).